The chain runs to 349 residues: Decapping nuclease RAI1 (349 aa).

Residue E157 coordinates a divalent metal cation. E205 lines the substrate pocket. 3 residues coordinate a divalent metal cation: D207, E222, and L223. Substrate is bound by residues K224 and Q248.

It belongs to the DXO/Dom3Z family. In terms of assembly, interacts with RAT1; the interaction is direct, stabilizes RAT1 protein structure and stimulates its exoribonuclease activity. The interaction also stimulates RAI1 pyrophosphohydrolase activity, probably by recruiting it to mRNA substrates. The cofactor is a divalent metal cation.

It localises to the nucleus. The catalysed reaction is a 5'-end NAD(+)-phospho-ribonucleoside in mRNA + H2O = a 5'-end phospho-ribonucleoside in mRNA + NAD(+) + H(+). It carries out the reaction a 5'-end (N(7)-methyl 5'-triphosphoguanosine)-ribonucleoside-ribonucleotide in mRNA + H2O = a (N(7)-methyl 5'-triphosphoguanosine)-nucleoside + a 5'-end phospho-ribonucleoside in mRNA + H(+). The enzyme catalyses a 5'-end triphospho-ribonucleoside in mRNA + H2O = a 5'-end phospho-ribonucleoside in mRNA + diphosphate + H(+). Decapping enzyme for NAD-capped RNAs: specifically hydrolyzes the nicotinamide adenine dinucleotide (NAD) cap from a subset of RNAs by removing the entire NAD moiety from the 5'-end of an NAD-capped RNA. The NAD-cap is present at the 5'-end of some RNAs and snoRNAs. In contrast to the canonical 5'-end N7 methylguanosine (m7G) cap, the NAD cap promotes mRNA decay. Also acts as a non-canonical decapping enzyme that removes the entire cap structure of m7G capped or incompletely capped RNAs. Has decapping activity toward incomplete 5'-end m7G cap mRNAs such as unmethylated 5'-end-capped RNA (cap0), while it has no activity toward 2'-O-ribose methylated m7G cap (cap1). Also possesses RNA 5'-pyrophosphohydrolase activity by hydrolyzing the 5'-end triphosphate to release pyrophosphates. Stimulates exoribonuclease activity of Rat1, allowing it to degrade RNAs with stable secondary structure more effectively. The protein is Decapping nuclease RAI1 (RAI1) of Yarrowia lipolytica (strain CLIB 122 / E 150) (Yeast).